The following is a 511-amino-acid chain: Cytochrome P450 monooxygenase PUL2 (511 aa).

A helical transmembrane segment spans residues 14–34 (WMAFVYFTPVLFVVLYLLKEW). N116, N141, and N442 each carry an N-linked (GlcNAc...) asparagine glycan. C462 serves as a coordination point for heme.

This sequence belongs to the cytochrome P450 family. The cofactor is heme.

It is found in the membrane. The protein operates within siderophore biosynthesis. In terms of biological role, cytochrome P450 monooxygenase; part of the PUL gene cluster that mediates the formation of pulcherrimin, a red iron-containing pigment composed of two cyclized and modified leucine molecules that acts as a siderophore, a chelator that binds iron outside the cell for subsequent uptake. Two leucine molecules are cyclized via a cyclodipeptide synthase, and the resulting diketopiperazine is oxidized by a cytochrome P450 monooxygenase to generate pulcherriminic acid (PA), which can then spontaneously bind iron to form pulcherrimin. The probable cyclodipeptide synthase PUL1 and the cytochrome P450 monooxygenase PUL2 encode the enzymes responsible for the two-step pulcherrimin biosynthesis pathway. The chain is Cytochrome P450 monooxygenase PUL2 from Kluyveromyces lactis (strain ATCC 8585 / CBS 2359 / DSM 70799 / NBRC 1267 / NRRL Y-1140 / WM37) (Yeast).